The primary structure comprises 74 residues: Defensin (74 aa).

The N-terminal stretch at 1 to 22 is a signal peptide; it reads MRGLCICLVFLLVCGLVSATAA. Residues 23-36 constitute a propeptide that is removed on maturation; it reads APAESEVAHLRVRR. Intrachain disulfides connect C40–C61, C47–C69, and C51–C71.

Hemolymph.

It localises to the secreted. Its function is as follows. Antibacterial activity against Gram-positive and Gram-negative bacteria. The polypeptide is Defensin (VSNA1) (Dermacentor variabilis (American dog tick)).